Consider the following 193-residue polypeptide: MKNYQLVLASTSPFRQQLLEKLSVPFICLSPDCDETPYESEAPLDLVQRLAVNKATSCSIKKPSLVIGSDQVCVIDGKIVGKPLNRENAINQLLAQSGKAITFYTGLAVYNSVTNLTEVGYDTFEVHFRNLNREQIERYVDREEPFYCAGSFKSEGMGICLFEKLVGKDPNTLVGLPLIDLIDMLQKQGFEIL.

Residue aspartate 70 is the Proton acceptor of the active site.

Belongs to the Maf family. YceF subfamily. The cofactor is a divalent metal cation.

It localises to the cytoplasm. It carries out the reaction N(7)-methyl-GTP + H2O = N(7)-methyl-GMP + diphosphate + H(+). In terms of biological role, nucleoside triphosphate pyrophosphatase that hydrolyzes 7-methyl-GTP (m(7)GTP). May have a dual role in cell division arrest and in preventing the incorporation of modified nucleotides into cellular nucleic acids. In Vibrio parahaemolyticus serotype O3:K6 (strain RIMD 2210633), this protein is 7-methyl-GTP pyrophosphatase.